The following is a 183-amino-acid chain: Inner membrane protein p54 (183 aa).

A helical membrane pass occupies residues 32–52 (YTILIAIVVLVIIIIVLIYLF). The tract at residues 81–157 (EVTPQPGTSK…PYTTVTTQNT (77 aa)) is disordered. Polar residues predominate over residues 111-122 (RPATNKPVTDNP). Residues 130–143 (ATGGPAAAPAAASA) show a composition bias toward low complexity. The interval 149–161 (YTTVTTQNTASQT) is interaction with host DYNLL1.

This sequence belongs to the asfivirus envelope protein p54 family. In terms of assembly, interacts with the host light chain cytoplasmic dynein DYNLL1; this interaction is critical for intracellular microtubule-dependent virus transport toward viral factories.

The protein localises to the virion membrane. It is found in the host cytoplasm. Its subcellular location is the host cytoskeleton. The protein resides in the host endoplasmic reticulum membrane. Functionally, inner envelope protein involved, through its interaction with host dynein, in the intracellular microtubule-dependent transport of viral capsid toward viral factories. Seems to induce caspase-3 activation and apoptosis. Plays a role in virion morphogenesis by recruiting and transforming the host ER membranes into the precursors of the viral envelope. Involved in virus attachment to the host cell. The polypeptide is Inner membrane protein p54 (Ornithodoros (relapsing fever ticks)).